The primary structure comprises 275 residues: Succinate dehydrogenase [ubiquinone] iron-sulfur subunit, mitochondrial (275 aa).

The transit peptide at 1 to 24 (MFSRRIQVLSPFLKHFVNRNARMM) directs the protein to the mitochondrion. The region spanning 57–137 (PEVKPKLQKY…PTKIYPLPHC (81 aa)) is the 2Fe-2S ferredoxin-type domain. Residues Cys-98, Cys-103, Cys-106, and Cys-118 each contribute to the [2Fe-2S] cluster site. Residues 178–208 (DRAKLDGLYECILCACCSTSCPSYWWNSEEY) enclose the 4Fe-4S ferredoxin-type domain. Positions 188, 191, and 194 each coordinate [4Fe-4S] cluster. Cys-198 lines the [3Fe-4S] cluster pocket. Position 203 (Trp-203) interacts with a ubiquinone. Positions 245 and 251 each coordinate [3Fe-4S] cluster. Residue Cys-255 coordinates [4Fe-4S] cluster.

It belongs to the succinate dehydrogenase/fumarate reductase iron-sulfur protein family. In terms of assembly, component of complex II composed of four subunits: a flavoprotein (FP), an iron-sulfur protein (IP), and a cytochrome b composed of a large and a small subunit. It depends on [2Fe-2S] cluster as a cofactor. [3Fe-4S] cluster serves as cofactor. The cofactor is [4Fe-4S] cluster.

It localises to the mitochondrion inner membrane. It carries out the reaction a quinone + succinate = fumarate + a quinol. Its pathway is carbohydrate metabolism; tricarboxylic acid cycle; fumarate from succinate (eukaryal route): step 1/1. Functionally, iron-sulfur protein (IP) subunit of succinate dehydrogenase (SDH) that is involved in complex II of the mitochondrial electron transport chain and is responsible for transferring electrons from succinate to ubiquinone (coenzyme Q). This chain is Succinate dehydrogenase [ubiquinone] iron-sulfur subunit, mitochondrial (sdh2), found in Schizosaccharomyces pombe (strain 972 / ATCC 24843) (Fission yeast).